The following is a 187-amino-acid chain: CASP-like protein SELMODRAFT_416718 (187 aa).

Residues 1–21 (MMFGGVGMATLPLSLIFAFKN) traverse the membrane as a helical segment. Residues 22-100 (RPKCVITRAQ…EAFPQGEKAD (79 aa)) are Extracellular-facing. The chain crosses the membrane as a helical span at residues 101-119 (TSWALTVLFYLAKLVFGIL). The Cytoplasmic segment spans residues 120-125 (GLALSV). A helical transmembrane segment spans residues 126-145 (IWLLHIIVFMLVNPPAFPFL). At 146 to 155 (NQVFIQLDSA) the chain is on the extracellular side. The helical transmembrane segment at 156–176 (WGLLGTTAFAIFCYYLVMSVI) threads the bilayer. The Cytoplasmic portion of the chain corresponds to 177 to 187 (SGEMHSIYPMK).

It belongs to the Casparian strip membrane proteins (CASP) family. Homodimer and heterodimers.

The protein localises to the cell membrane. The sequence is that of CASP-like protein SELMODRAFT_416718 from Selaginella moellendorffii (Spikemoss).